The primary structure comprises 209 residues: Auxin-binding protein ABP19a (209 aa).

Positions 1-18 are cleaved as a signal peptide; that stretch reads MIFPIFFTFFLLLSSSHA. Residues cysteine 24 and cysteine 39 are joined by a disulfide bond. In terms of domain architecture, Cupin type-1 spans 53–199; the sequence is SGLGIAGNTT…TTFLDAAQIK (147 aa). A glycan (N-linked (GlcNAc...) asparagine) is linked at asparagine 60. Residues histidine 101, histidine 103, glutamate 108, and histidine 147 each contribute to the Mn(2+) site.

The protein belongs to the germin family. Interacts with ABP20.

The protein resides in the secreted. It is found in the extracellular space. The protein localises to the apoplast. Its subcellular location is the cell wall. Probable receptor for the plant growth-promoting hormone auxin. In Prunus persica (Peach), this protein is Auxin-binding protein ABP19a (ABP19A).